Consider the following 389-residue polypeptide: Indole-3-acetate monooxygenase (389 aa).

The protein belongs to the HpaH/HsaA monooxygenase family.

The catalysed reaction is (indol-3-yl)acetate + NADH + O2 + H(+) = 2-hydroxy-(1H-indol-3-yl)acetate + NAD(+) + H2O. The enzyme catalyses indole + NADH + O2 + H(+) = indoxyl + NAD(+) + H2O. Functionally, involved in the degradation of the plant hormone indole-3-acetic acid (IAA). Catalyzes the first step of the pathway, the conversion of IAA to 2-hydroxy-IAA (2-OH-IAA). Can also convert indole to indoxyl, which spontaneously dimerizes in the presence of oxygen to form the blue pigment indigo. The protein is Indole-3-acetate monooxygenase of Acinetobacter baumannii (strain ATCC 19606 / DSM 30007 / JCM 6841 / CCUG 19606 / CIP 70.34 / NBRC 109757 / NCIMB 12457 / NCTC 12156 / 81).